Consider the following 84-residue polypeptide: Small ribosomal subunit protein uS17 (84 aa).

It belongs to the universal ribosomal protein uS17 family. As to quaternary structure, part of the 30S ribosomal subunit.

In terms of biological role, one of the primary rRNA binding proteins, it binds specifically to the 5'-end of 16S ribosomal RNA. This chain is Small ribosomal subunit protein uS17, found in Porphyromonas gingivalis (strain ATCC 33277 / DSM 20709 / CIP 103683 / JCM 12257 / NCTC 11834 / 2561).